The chain runs to 623 residues: uncharacterized protein (623 aa).

A compositionally biased stretch (basic and acidic residues) spans 157–166 (LNESPLRDQQ). Residues 157 to 237 (LNESPLRDQQ…QGLPDHNNSI (81 aa)) are disordered. Residues 167 to 177 (ESSTPSKNSTL) show a composition bias toward polar residues. Over residues 193–210 (AFRPLPSPSRRSSQSAPA) the composition is skewed to low complexity.

This is an uncharacterized protein from Macaca fascicularis (Crab-eating macaque).